Consider the following 428-residue polypeptide: MRKINSALKPLKGDVSVDADKSISHRAVIFSALAPGKSIIKNFLQANDTLSSCSCLRQLGIKIAAMDSEMQVYGRGLSGFSEPHTVLDCGNSGTTMRLMAGLLSAQPFLSILNGDESLNQRPMKRIIEPLGIMGANIQARQNGNYPPLVIRGNRLSGLSYQLPVASAQVKSALMLAALNADSETLLSEPQKTRDHSERMLTAMGADIAVNGLEIRLKPGKELQATEFLVPGDISSAAFFMVAASIIPGSELLIRHVGVNPSRAGIIEILNEMGARIKLENERTISGEPVADLIVSHSRLQAIDIDGAVIPRLIDEIPILAVAMALAEGESTVRGAAELRVKETDRIAAISTELAKMGADIRERSDGFVIKGKPDSLKGGRVASKGDHRIAMSLAVAALAAKGESVIEDSEVVNISFPRFWDLLNTLTS.

Residues Lys-21, Ser-22, and Arg-26 each coordinate 3-phosphoshikimate. Lys-21 is a binding site for phosphoenolpyruvate. Phosphoenolpyruvate-binding residues include Gly-93 and Arg-121. Residues Ser-166, Gln-168, Asp-314, and Lys-341 each contribute to the 3-phosphoshikimate site. Gln-168 is a binding site for phosphoenolpyruvate. Asp-314 serves as the catalytic Proton acceptor. Phosphoenolpyruvate contacts are provided by Arg-345 and Arg-388.

This sequence belongs to the EPSP synthase family. Monomer.

It is found in the cytoplasm. The enzyme catalyses 3-phosphoshikimate + phosphoenolpyruvate = 5-O-(1-carboxyvinyl)-3-phosphoshikimate + phosphate. It functions in the pathway metabolic intermediate biosynthesis; chorismate biosynthesis; chorismate from D-erythrose 4-phosphate and phosphoenolpyruvate: step 6/7. Functionally, catalyzes the transfer of the enolpyruvyl moiety of phosphoenolpyruvate (PEP) to the 5-hydroxyl of shikimate-3-phosphate (S3P) to produce enolpyruvyl shikimate-3-phosphate and inorganic phosphate. This chain is 3-phosphoshikimate 1-carboxyvinyltransferase, found in Syntrophomonas wolfei subsp. wolfei (strain DSM 2245B / Goettingen).